The sequence spans 576 residues: Putative pentatricopeptide repeat-containing protein At5g47460 (576 aa).

14 PPR repeats span residues 20-53, 54-88, 89-119, 120-154, 155-189, 191-225, 226-252, 253-287, 288-318, 319-353, 354-384, 385-419, 421-452, and 458-488; these read SSNS…GEKP, DASP…GFVS, NTRL…MPDP, DVIS…DVFP, NEFS…GLEK, NVVV…DTVS, WNAI…MPNP, DTVT…NSSS, WNTI…GVRF, DEYS…GLDS, RVVV…MPRK, NLIV…RFLK, DRFT…MINE, and SVEH…FGFG. The type E motif stretch occupies residues 493–570; it reads AWRALLGACS…EVGSSWIDSR (78 aa).

This sequence belongs to the PPR family. PCMP-E subfamily.

The sequence is that of Putative pentatricopeptide repeat-containing protein At5g47460 (PCMP-E103) from Arabidopsis thaliana (Mouse-ear cress).